Here is a 268-residue protein sequence, read N- to C-terminus: Protein MSS18 (268 aa).

The protein to baculovirus occlusion-derived virus envelope protein E27 (ODV-E27).

Its subcellular location is the mitochondrion. Involved in splicing of intron aI5-beta of the mitochondrial COX1 transcript. This Saccharomyces cerevisiae (strain ATCC 204508 / S288c) (Baker's yeast) protein is Protein MSS18 (MSS18).